We begin with the raw amino-acid sequence, 568 residues long: Estrogen receptor beta-1 (568 aa).

Positions 12–169 (SEYAEGDSSL…SLRGKADMHY (158 aa)) are modulating. 2 consecutive NR C4-type zinc fingers follow at residues 170–190 (CAVC…CEGC) and 206–230 (CPAT…LRKC). Positions 170–235 (CAVCSDYASG…RLRKCYEVGM (66 aa)) form a DNA-binding region, nuclear receptor. One can recognise an NR LBD domain in the interval 292–528 (SPEELIARIM…DLLLEMLDAH (237 aa)).

The protein belongs to the nuclear hormone receptor family. NR3 subfamily. As to quaternary structure, binds DNA as a homodimer. Can form a heterodimer with ER-alpha.

The protein resides in the nucleus. Binds estrogens with an affinity similar to that of ER-alpha, and activates expression of reporter genes containing estrogen response elements (ERE) in an estrogen-dependent manner. The sequence is that of Estrogen receptor beta-1 (esr2a) from Carassius auratus (Goldfish).